The following is a 295-amino-acid chain: Small ribosomal subunit protein uS2 (295 aa).

Residue S2 is modified to N-acetylserine. Position 43 is a phosphoserine (S43). K52 is subject to N6-acetyllysine. The interaction with PPP1R16B stretch occupies residues 54–113 (TWEKLLLAARAIVAIENPADVSVISSRNTGQRAVLKFAAATGATPIAGRFTPGTFTNQIQ). K89 bears the N6-acetyllysine; alternate mark. A Glycyl lysine isopeptide (Lys-Gly) (interchain with G-Cter in SUMO2); alternate cross-link involves residue K89. T97 carries the phosphothreonine modification. Laminin-binding regions lie at residues 161–180 (IPCN…MLAR) and 205–229 (RDPE…EFQG). [DE]-W-[ST] repeat units lie at residues 230-232 (EWT), 247-249 (DWS), 266-268 (DWS), 275-277 (DWS), and 293-295 (EWS). The interval 242–295 (QPEVADWSEGVQVPSVPIQQFPTEDWSAQPATEDWSAAPTAQATEWVGTTTEWS) is laminin-binding. Residues 266–295 (DWSAQPATEDWSAAPTAQATEWVGTTTEWS) are disordered. The span at 280–295 (PTAQATEWVGTTTEWS) shows a compositional bias: polar residues.

The protein belongs to the universal ribosomal protein uS2 family. In terms of assembly, monomer (37LRP) and homodimer (67LR). Component of the small ribosomal subunit. Mature ribosomes consist of a small (40S) and a large (60S) subunit. The 40S subunit contains about 33 different proteins and 1 molecule of RNA (18S). The 60S subunit contains about 49 different proteins and 3 molecules of RNA (28S, 5.8S and 5S). Interacts with RPS21. Interacts with several laminins including at least LAMB1. Interacts with MDK. The mature dimeric form interacts with PPP1R16B (via its fourth ankyrin repeat). Interacts with PPP1CA only in the presence of PPP1R16B. Acylated. Acylation may be a prerequisite for conversion of the monomeric 37 kDa laminin receptor precursor (37LRP) to the mature dimeric 67 kDa laminin receptor (67LR), and may provide a mechanism for membrane association. Post-translationally, cleaved by stromelysin-3 (ST3) at the cell surface. Cleavage by stromelysin-3 may be a mechanism to alter cell-extracellular matrix interactions.

The protein localises to the cell membrane. The protein resides in the cytoplasm. Its subcellular location is the nucleus. In terms of biological role, required for the assembly and/or stability of the 40S ribosomal subunit. Required for the processing of the 20S rRNA-precursor to mature 18S rRNA in a late step of the maturation of 40S ribosomal subunits. Also functions as a cell surface receptor for laminin. Plays a role in cell adhesion to the basement membrane and in the consequent activation of signaling transduction pathways. May play a role in cell fate determination and tissue morphogenesis. Also acts as a receptor for several other ligands, including the pathogenic prion protein, viruses, and bacteria. Acts as a PPP1R16B-dependent substrate of PPP1CA. The protein is Small ribosomal subunit protein uS2 of Oryctolagus cuniculus (Rabbit).